Reading from the N-terminus, the 236-residue chain is Phosphoribosylformylglycinamidine synthase subunit PurQ (236 aa).

One can recognise a Glutamine amidotransferase type-1 domain in the interval 3 to 234 (FGVIVFPGSN…VDWWERGERL (232 aa)). The active-site Nucleophile is cysteine 86. Residues histidine 203 and glutamate 205 contribute to the active site.

In terms of assembly, part of the FGAM synthase complex composed of 1 PurL, 1 PurQ and 2 PurS subunits.

It is found in the cytoplasm. The enzyme catalyses N(2)-formyl-N(1)-(5-phospho-beta-D-ribosyl)glycinamide + L-glutamine + ATP + H2O = 2-formamido-N(1)-(5-O-phospho-beta-D-ribosyl)acetamidine + L-glutamate + ADP + phosphate + H(+). The catalysed reaction is L-glutamine + H2O = L-glutamate + NH4(+). It functions in the pathway purine metabolism; IMP biosynthesis via de novo pathway; 5-amino-1-(5-phospho-D-ribosyl)imidazole from N(2)-formyl-N(1)-(5-phospho-D-ribosyl)glycinamide: step 1/2. Part of the phosphoribosylformylglycinamidine synthase complex involved in the purines biosynthetic pathway. Catalyzes the ATP-dependent conversion of formylglycinamide ribonucleotide (FGAR) and glutamine to yield formylglycinamidine ribonucleotide (FGAM) and glutamate. The FGAM synthase complex is composed of three subunits. PurQ produces an ammonia molecule by converting glutamine to glutamate. PurL transfers the ammonia molecule to FGAR to form FGAM in an ATP-dependent manner. PurS interacts with PurQ and PurL and is thought to assist in the transfer of the ammonia molecule from PurQ to PurL. In Moorella thermoacetica (strain ATCC 39073 / JCM 9320), this protein is Phosphoribosylformylglycinamidine synthase subunit PurQ.